The chain runs to 65 residues: Large ribosomal subunit protein bL35 (65 aa).

This sequence belongs to the bacterial ribosomal protein bL35 family.

The chain is Large ribosomal subunit protein bL35 from Thermoanaerobacter pseudethanolicus (strain ATCC 33223 / 39E) (Clostridium thermohydrosulfuricum).